An 88-amino-acid polypeptide reads, in one-letter code: Small ribosomal subunit protein uS17 (88 aa).

The protein belongs to the universal ribosomal protein uS17 family. As to quaternary structure, part of the 30S ribosomal subunit.

Functionally, one of the primary rRNA binding proteins, it binds specifically to the 5'-end of 16S ribosomal RNA. This chain is Small ribosomal subunit protein uS17, found in Azotobacter vinelandii (strain DJ / ATCC BAA-1303).